A 121-amino-acid polypeptide reads, in one-letter code: Aspartate 1-decarboxylase (121 aa).

Residue Ser-25 is the Schiff-base intermediate with substrate; via pyruvic acid of the active site. Ser-25 is modified (pyruvic acid (Ser)). Thr-57 is a substrate binding site. Catalysis depends on Tyr-58, which acts as the Proton donor. 73–75 lines the substrate pocket; that stretch reads GAA.

The protein belongs to the PanD family. Heterooctamer of four alpha and four beta subunits. It depends on pyruvate as a cofactor. Is synthesized initially as an inactive proenzyme, which is activated by self-cleavage at a specific serine bond to produce a beta-subunit with a hydroxyl group at its C-terminus and an alpha-subunit with a pyruvoyl group at its N-terminus.

The protein localises to the cytoplasm. It catalyses the reaction L-aspartate + H(+) = beta-alanine + CO2. The protein operates within cofactor biosynthesis; (R)-pantothenate biosynthesis; beta-alanine from L-aspartate: step 1/1. Functionally, catalyzes the pyruvoyl-dependent decarboxylation of aspartate to produce beta-alanine. In Wolinella succinogenes (strain ATCC 29543 / DSM 1740 / CCUG 13145 / JCM 31913 / LMG 7466 / NCTC 11488 / FDC 602W) (Vibrio succinogenes), this protein is Aspartate 1-decarboxylase.